The primary structure comprises 184 residues: ATP synthase subunit delta (184 aa).

The protein belongs to the ATPase delta chain family. As to quaternary structure, F-type ATPases have 2 components, F(1) - the catalytic core - and F(0) - the membrane proton channel. F(1) has five subunits: alpha(3), beta(3), gamma(1), delta(1), epsilon(1). F(0) has three main subunits: a(1), b(2) and c(10-14). The alpha and beta chains form an alternating ring which encloses part of the gamma chain. F(1) is attached to F(0) by a central stalk formed by the gamma and epsilon chains, while a peripheral stalk is formed by the delta and b chains.

Its subcellular location is the cell membrane. Its function is as follows. F(1)F(0) ATP synthase produces ATP from ADP in the presence of a proton or sodium gradient. F-type ATPases consist of two structural domains, F(1) containing the extramembraneous catalytic core and F(0) containing the membrane proton channel, linked together by a central stalk and a peripheral stalk. During catalysis, ATP synthesis in the catalytic domain of F(1) is coupled via a rotary mechanism of the central stalk subunits to proton translocation. This protein is part of the stalk that links CF(0) to CF(1). It either transmits conformational changes from CF(0) to CF(1) or is implicated in proton conduction. This chain is ATP synthase subunit delta, found in Amoebophilus asiaticus (strain 5a2).